The sequence spans 172 residues: Phosphopantetheine adenylyltransferase (172 aa).

T13 provides a ligand contact to substrate. Residues 13–14 and H21 each bind ATP; that span reads TF. Residues K45, L81, and R95 each contribute to the substrate site. ATP is bound by residues 96–98, E106, and 131–137; these read GLR and SQFISSR.

Belongs to the bacterial CoaD family. As to quaternary structure, homohexamer. Mg(2+) serves as cofactor.

Its subcellular location is the cytoplasm. The catalysed reaction is (R)-4'-phosphopantetheine + ATP + H(+) = 3'-dephospho-CoA + diphosphate. The protein operates within cofactor biosynthesis; coenzyme A biosynthesis; CoA from (R)-pantothenate: step 4/5. In terms of biological role, reversibly transfers an adenylyl group from ATP to 4'-phosphopantetheine, yielding dephospho-CoA (dPCoA) and pyrophosphate. The sequence is that of Phosphopantetheine adenylyltransferase from Rhodospirillum rubrum (strain ATCC 11170 / ATH 1.1.1 / DSM 467 / LMG 4362 / NCIMB 8255 / S1).